We begin with the raw amino-acid sequence, 506 residues long: Tripartite terminase subunit 3 (506 aa).

The active-site For ATPase activity is the Glu-128. Catalysis depends on for nuclease activity residues Asp-282, Glu-354, and Asp-475.

It belongs to the herpesviridae TRM3 protein family. As to quaternary structure, interacts with the terminase subunits TRM1 and TRM2. Interacts with portal protein.

Its subcellular location is the host nucleus. Component of the molecular motor that translocates viral genomic DNA in empty capsid during DNA packaging. Forms a tripartite terminase complex together with TRM1 and TRM2 in the host cytoplasm. Once the complex reaches the host nucleus, it interacts with the capsid portal vertex. This portal forms a ring in which genomic DNA is translocated into the capsid. TRM3 carries an RNase H-like nuclease activity that plays an important role for the cleavage of concatemeric viral DNA into unit length genomes. This chain is Tripartite terminase subunit 3, found in Amazona oratrix (yellow-headed parrot).